Consider the following 311-residue polypeptide: Porphobilinogen deaminase (311 aa).

Cysteine 242 is modified (S-(dipyrrolylmethanemethyl)cysteine).

It belongs to the HMBS family. Monomer. Dipyrromethane is required as a cofactor.

It carries out the reaction 4 porphobilinogen + H2O = hydroxymethylbilane + 4 NH4(+). Its pathway is porphyrin-containing compound metabolism; protoporphyrin-IX biosynthesis; coproporphyrinogen-III from 5-aminolevulinate: step 2/4. Tetrapolymerization of the monopyrrole PBG into the hydroxymethylbilane pre-uroporphyrinogen in several discrete steps. The sequence is that of Porphobilinogen deaminase (hemC) from Neisseria meningitidis serogroup B (strain ATCC BAA-335 / MC58).